The primary structure comprises 356 residues: MKTLEMELGQNSYSIFIEKGIMNDIGKRISKLYSGEKIVLITDDNVNKFYGEKLEKNIKDFGYDVFKIVIKAGEKSKNIKTLTDIYSRLAEFRITRSDLIVTLGGGVVGDIGGFAAATYLRGISYIQIPTSLLAQIDSSIGGKVAVDLEQGKNLVGNFYQPKAVFIDPLFLKTLDIRFLHDGMGEVIKYGAIRDGELFKRLEEFKDDNELMDNIEYVIHACCRIKKQVVENDEKDNGERMILNFGHTIGHAVEEFFHYEKFTHGECVAYGMYSITKNSERLGITKEGTTEKLKNIIKKYSLPFNIDNLKNERIYEIAALDKKSRGKFINLVLLKDIGDCFIEKVESKETYKYLRVV.

Residues 106 to 110, 130 to 131, K143, K152, and 170 to 173 contribute to the NAD(+) site; these read GVVGD, TS, and FLKT. 3 residues coordinate Zn(2+): E185, H246, and H263.

This sequence belongs to the sugar phosphate cyclases superfamily. Dehydroquinate synthase family. Requires NAD(+) as cofactor. The cofactor is Co(2+). Zn(2+) serves as cofactor.

The protein localises to the cytoplasm. It carries out the reaction 7-phospho-2-dehydro-3-deoxy-D-arabino-heptonate = 3-dehydroquinate + phosphate. The protein operates within metabolic intermediate biosynthesis; chorismate biosynthesis; chorismate from D-erythrose 4-phosphate and phosphoenolpyruvate: step 2/7. In terms of biological role, catalyzes the conversion of 3-deoxy-D-arabino-heptulosonate 7-phosphate (DAHP) to dehydroquinate (DHQ). The protein is 3-dehydroquinate synthase of Clostridium acetobutylicum (strain ATCC 824 / DSM 792 / JCM 1419 / IAM 19013 / LMG 5710 / NBRC 13948 / NRRL B-527 / VKM B-1787 / 2291 / W).